The sequence spans 563 residues: Adenine deaminase (563 aa).

It belongs to the metallo-dependent hydrolases superfamily. Adenine deaminase family. The cofactor is Mn(2+).

The enzyme catalyses adenine + H2O + H(+) = hypoxanthine + NH4(+). The polypeptide is Adenine deaminase (Lactiplantibacillus plantarum (strain ATCC BAA-793 / NCIMB 8826 / WCFS1) (Lactobacillus plantarum)).